We begin with the raw amino-acid sequence, 160 residues long: Cytochrome b6-f complex subunit 4 (160 aa).

3 helical membrane passes run 36–56 (LLYI…GLAV), 95–115 (LLGV…PFLE), and 131–151 (TVFL…ALPI).

The protein belongs to the cytochrome b family. PetD subfamily. In terms of assembly, the 4 large subunits of the cytochrome b6-f complex are cytochrome b6, subunit IV (17 kDa polypeptide, petD), cytochrome f and the Rieske protein, while the 4 small subunits are petG, petL, petM and petN. The complex functions as a dimer.

Its subcellular location is the plastid. It is found in the chloroplast thylakoid membrane. Its function is as follows. Component of the cytochrome b6-f complex, which mediates electron transfer between photosystem II (PSII) and photosystem I (PSI), cyclic electron flow around PSI, and state transitions. The polypeptide is Cytochrome b6-f complex subunit 4 (Spirogyra maxima (Green alga)).